Reading from the N-terminus, the 113-residue chain is Ig heavy chain V-III region E109 (113 aa).

The region spanning 1–113 is the Ig-like domain; that stretch reads EVKLEESGGG…YWGQGTLVTV (113 aa). Cys-22 and Cys-98 are joined by a disulfide.

The chain is Ig heavy chain V-III region E109 from Mus musculus (Mouse).